The chain runs to 573 residues: Arylsulfatase I (573 aa).

An N-terminal signal peptide occupies residues 1 to 23; it reads MHALSGFSLVSLLSLGYLSWDWA. Positions 55, 56, and 93 each coordinate Ca(2+). Residue C93 is the Nucleophile of the active site. A 3-oxoalanine (Cys) modification is found at C93. K147 lines the substrate pocket. H149 is a catalytic residue. H239 lines the substrate pocket. Residues N276 and N288 are each glycosylated (N-linked (GlcNAc...) asparagine). Ca(2+)-binding residues include D297 and N298. K315 serves as a coordination point for substrate. N-linked (GlcNAc...) asparagine glycans are attached at residues N466 and N496. Residues 506-550 form a disordered region; sequence AANPRAHPDFNGGAWGPWASDEDEEEEDEEEEGRARSFPRGRRKK. The segment covering 525-537 has biased composition (acidic residues); sequence SDEDEEEEDEEEE.

Belongs to the sulfatase family. The cofactor is Ca(2+). In terms of processing, the oxidation of Cys-93 residue to 3-oxoalanine (also known as C(alpha)-formylglycine) by SUMF1/Sulfatase-modifying factor 1, seems critical for catalytic activity.

The protein localises to the secreted. Its subcellular location is the endoplasmic reticulum. Its function is as follows. Displays arylsulfatase activity at neutral pH, when co-expressed with SUMF1; arylsulfatase activity is measured in the secretion medium of retinal cell line, but no activity is recorded when measured in cell extracts. This Rattus norvegicus (Rat) protein is Arylsulfatase I (Arsi).